Consider the following 97-residue polypeptide: UPF0235 protein Ppha_2415 (97 aa).

This sequence belongs to the UPF0235 family.

The protein is UPF0235 protein Ppha_2415 of Pelodictyon phaeoclathratiforme (strain DSM 5477 / BU-1).